A 250-amino-acid chain; its full sequence is Glutathione transferase omega-1 (250 aa).

Residues 21-101 (SKGSFRVYNM…YLDDAFPETR (81 aa)) form the GST N-terminal domain. Catalysis depends on Cys-33, which acts as the Nucleophile. Residues Lys-60 and 85–86 (ES) each bind glutathione. Residues 106-234 (DPYEKVQQKL…TQSLEHGAAF (129 aa)) form the GST C-terminal domain.

Belongs to the GST superfamily. Omega family. Homodimer. As to expression, expressed in the intestinal cells.

It is found in the cytoplasm. The enzyme catalyses RX + glutathione = an S-substituted glutathione + a halide anion + H(+). It carries out the reaction L-dehydroascorbate + 2 glutathione = glutathione disulfide + L-ascorbate. The catalysed reaction is methylarsonate + 2 glutathione + H(+) = methylarsonous acid + glutathione disulfide + H2O. Exhibits glutathione-dependent thiol transferase activity. Has dehydroascorbate reductase activity and may contribute to the recycling of ascorbic acid. Participates in the biotransformation of inorganic arsenic and reduces monomethylarsonic acid (MMA). Protects against environmental stress and oxidative stress. This is Glutathione transferase omega-1 (gsto-1) from Caenorhabditis elegans.